A 185-amino-acid chain; its full sequence is Large ribosomal subunit protein uL5 (185 aa).

This sequence belongs to the universal ribosomal protein uL5 family. In terms of assembly, part of the 50S ribosomal subunit; part of the 5S rRNA/L5/L18/L25 subcomplex. Contacts the 5S rRNA and the P site tRNA. Forms a bridge to the 30S subunit in the 70S ribosome.

This is one of the proteins that bind and probably mediate the attachment of the 5S RNA into the large ribosomal subunit, where it forms part of the central protuberance. In the 70S ribosome it contacts protein S13 of the 30S subunit (bridge B1b), connecting the 2 subunits; this bridge is implicated in subunit movement. Contacts the P site tRNA; the 5S rRNA and some of its associated proteins might help stabilize positioning of ribosome-bound tRNAs. This is Large ribosomal subunit protein uL5 from Caulobacter vibrioides (strain NA1000 / CB15N) (Caulobacter crescentus).